Here is a 160-residue protein sequence, read N- to C-terminus: Protein-export protein SecB (160 aa).

This sequence belongs to the SecB family. As to quaternary structure, homotetramer, a dimer of dimers. One homotetramer interacts with 1 SecA dimer.

Its subcellular location is the cytoplasm. Its function is as follows. One of the proteins required for the normal export of preproteins out of the cell cytoplasm. It is a molecular chaperone that binds to a subset of precursor proteins, maintaining them in a translocation-competent state. It also specifically binds to its receptor SecA. This Rhodospirillum rubrum (strain ATCC 11170 / ATH 1.1.1 / DSM 467 / LMG 4362 / NCIMB 8255 / S1) protein is Protein-export protein SecB.